Here is a 1367-residue protein sequence, read N- to C-terminus: Dynactin, 150 kDa isoform (1367 aa).

Residues 28 to 70 (GETAFAPGTWVGIELDEPSGKNDGSVQGERYFNCEMGYGMFVR) enclose the CAP-Gly domain. The interval 76–318 (VIAQPPPPPP…NLKATTITPR (243 aa)) is disordered. Low complexity-rich tracts occupy residues 88-99 (TFRRSVTTRPTS) and 132-149 (PSRT…RSPT). Polar residues predominate over residues 150 to 163 (KQLATASSSGNPSR). Composition is skewed to low complexity over residues 164–190 (SGTP…SRHS) and 243–259 (STGS…KRGS). Coiled-coil stretches lie at residues 321 to 598 (ITNT…MQEE), 637 to 698 (LQSD…EAEQ), and 1039 to 1199 (AELK…RARL).

Belongs to the dynactin 150 kDa subunit family. Large macromolecular complex of at least 10 components; p150(glued) binds directly to microtubules and to cytoplasmic dynein.

It localises to the cytoplasm. It is found in the cytoskeleton. Required for the cytoplasmic dynein-driven retrograde movement of vesicles and organelles along microtubules. Dynein-dynactin interaction is a key component of the mechanism of axonal transport of vesicles and organelles. The protein is Dynactin, 150 kDa isoform (ro-3) of Neurospora crassa (strain ATCC 24698 / 74-OR23-1A / CBS 708.71 / DSM 1257 / FGSC 987).